We begin with the raw amino-acid sequence, 986 residues long: Translation initiation factor IF-2 (986 aa).

Positions 95 to 394 (TFVRRDETSA…GRGKHQDQNT (300 aa)) are disordered. Positions 122-182 (ELQRREEEAR…EEEAAKKRAA (61 aa)) are enriched in basic and acidic residues. Over residues 183-222 (AEAAAREQAQAAKPAQAAQPAAAKAEPVAAKAAEPAVAKQ) the composition is skewed to low complexity. Residues 228–277 (ERAAAERAAQREAAKKAEDAARQAAEKARAEQEQIAKRRAAAEAEARAIR) show a composition bias toward basic and acidic residues. Over residues 320–342 (APSRPAAKKPAAAAPAATTTPSA) the composition is skewed to low complexity. Over residues 371 to 384 (TSGGVDRGWRGGPK) the composition is skewed to gly residues. Residues 486-655 (PRPPVVTVMG…LLQAEVLELK (170 aa)) enclose the tr-type G domain. The tract at residues 495–502 (GHVDHGKT) is G1. Residue 495–502 (GHVDHGKT) participates in GTP binding. The G2 stretch occupies residues 520–524 (GITQH). Residues 541–544 (DTPG) form a G3 region. GTP-binding positions include 541 to 545 (DTPGH) and 595 to 598 (NKID). The G4 stretch occupies residues 595–598 (NKID). Positions 631–633 (SAK) are G5.

This sequence belongs to the TRAFAC class translation factor GTPase superfamily. Classic translation factor GTPase family. IF-2 subfamily.

It localises to the cytoplasm. In terms of biological role, one of the essential components for the initiation of protein synthesis. Protects formylmethionyl-tRNA from spontaneous hydrolysis and promotes its binding to the 30S ribosomal subunits. Also involved in the hydrolysis of GTP during the formation of the 70S ribosomal complex. The protein is Translation initiation factor IF-2 of Paraburkholderia phytofirmans (strain DSM 17436 / LMG 22146 / PsJN) (Burkholderia phytofirmans).